We begin with the raw amino-acid sequence, 364 residues long: Aminomethyltransferase (364 aa).

The protein belongs to the GcvT family. In terms of assembly, the glycine cleavage system is composed of four proteins: P, T, L and H.

The enzyme catalyses N(6)-[(R)-S(8)-aminomethyldihydrolipoyl]-L-lysyl-[protein] + (6S)-5,6,7,8-tetrahydrofolate = N(6)-[(R)-dihydrolipoyl]-L-lysyl-[protein] + (6R)-5,10-methylene-5,6,7,8-tetrahydrofolate + NH4(+). In terms of biological role, the glycine cleavage system catalyzes the degradation of glycine. The protein is Aminomethyltransferase of Shigella flexneri serotype 5b (strain 8401).